The sequence spans 147 residues: Large ribosomal subunit protein bL9 (147 aa).

Belongs to the bacterial ribosomal protein bL9 family.

Binds to the 23S rRNA. In Bdellovibrio bacteriovorus (strain ATCC 15356 / DSM 50701 / NCIMB 9529 / HD100), this protein is Large ribosomal subunit protein bL9.